The sequence spans 341 residues: Glyceraldehyde-3-phosphate dehydrogenase 2 (341 aa).

NAD(+) is bound by residues 13 to 14, aspartate 35, and lysine 85; that span reads RI. D-glyceraldehyde 3-phosphate-binding positions include 157 to 159, threonine 188, 217 to 218, and arginine 240; these read SCT and TG. Cysteine 158 (nucleophile) is an active-site residue. Asparagine 322 contacts NAD(+).

This sequence belongs to the glyceraldehyde-3-phosphate dehydrogenase family. As to quaternary structure, homotetramer.

It localises to the cytoplasm. The catalysed reaction is D-glyceraldehyde 3-phosphate + phosphate + NAD(+) = (2R)-3-phospho-glyceroyl phosphate + NADH + H(+). The protein operates within carbohydrate degradation; glycolysis; pyruvate from D-glyceraldehyde 3-phosphate: step 1/5. This Caenorhabditis briggsae protein is Glyceraldehyde-3-phosphate dehydrogenase 2.